A 132-amino-acid polypeptide reads, in one-letter code: Ubiquinol-cytochrome c reductase complex assembly factor 4 (132 aa).

The N-terminal stretch at 1–15 (MNRVLCAPAAGAVRA) is a signal peptide. Over 16 to 78 (LRLIGRTSRS…GKGHQRPWWK (63 aa)) the chain is Mitochondrial matrix. The tract at residues 24–73 (RSLHPLPGSRDRAHPAAEEQDDPDRPTEFSSSKANPRRWSVGHSMGKGHQ) is disordered. Positions 32 to 50 (SRDRAHPAAEEQDDPDRPT) are enriched in basic and acidic residues. A helical transmembrane segment spans residues 79-95 (VLPLSCFLVALIIWCYL). At 96–132 (REESEADQWLRQVWGEVPEPSDRSEEPETPAAYRART) the chain is on the mitochondrial intermembrane side. Residues 110-132 (GEVPEPSDRSEEPETPAAYRART) are disordered.

Belongs to the UQCC4 family. In terms of assembly, forms a complex, named COMB/coordinator of mitochondrial CYTB biogenesis, composed of UQCC1, UQCC2, UQCC4, UQCC5 and UQCC6; stabilizes nascent cytochrome b/MT-CYB and promotes its membrane insertion. Forms a complex, named COMA, composed of UQCC1, UQCC2 and UQCC4; activates MT-CYB translation. Forms a complex, named COMC, composed of UQCC1, UQCC2; UQCC3 and UQCC4; mediates MT-CYB hemylation and association with the first nuclear-encoded complex III subunit UQCRQ. Complexes COMA and COMB are bound to the mitochondrion inner membrane by UQCC4.

The protein localises to the mitochondrion inner membrane. In terms of biological role, required for the assembly and stability of the mitochondrial ubiquinol-cytochrome c reductase complex (complex III (CIII) or cytochrome b-c1 complex), a multisubunit transmembrane complex that is part of the mitochondrial electron transport chain (ETC) which drives oxidative phosphorylation. The polypeptide is Ubiquinol-cytochrome c reductase complex assembly factor 4 (UQCC4) (Pongo abelii (Sumatran orangutan)).